A 429-amino-acid chain; its full sequence is Adenylosuccinate synthetase (429 aa).

Residues 12 to 18 and 40 to 42 each bind GTP; these read GDEGKGK and GHT. The active-site Proton acceptor is aspartate 13. Mg(2+) contacts are provided by aspartate 13 and glycine 40. IMP-binding positions include 13 to 16, 38 to 41, threonine 129, arginine 143, glutamine 223, threonine 238, and arginine 302; these read DEGK and NAGH. Histidine 41 (proton donor) is an active-site residue. 298-304 is a substrate binding site; sequence VVTGRKR. Residues arginine 304, 330–332, and 412–414 each bind GTP; these read KLD and STS.

This sequence belongs to the adenylosuccinate synthetase family. As to quaternary structure, homodimer. It depends on Mg(2+) as a cofactor.

The protein localises to the cytoplasm. It carries out the reaction IMP + L-aspartate + GTP = N(6)-(1,2-dicarboxyethyl)-AMP + GDP + phosphate + 2 H(+). It functions in the pathway purine metabolism; AMP biosynthesis via de novo pathway; AMP from IMP: step 1/2. Its function is as follows. Plays an important role in the de novo pathway of purine nucleotide biosynthesis. Catalyzes the first committed step in the biosynthesis of AMP from IMP. The sequence is that of Adenylosuccinate synthetase from Brucella suis (strain ATCC 23445 / NCTC 10510).